Reading from the N-terminus, the 184-residue chain is Ribosome-recycling factor (184 aa).

This sequence belongs to the RRF family.

The protein resides in the cytoplasm. Its function is as follows. Responsible for the release of ribosomes from messenger RNA at the termination of protein biosynthesis. May increase the efficiency of translation by recycling ribosomes from one round of translation to another. This Clostridium botulinum (strain ATCC 19397 / Type A) protein is Ribosome-recycling factor.